The chain runs to 307 residues: Oxygen-dependent coproporphyrinogen-III oxidase (307 aa).

Ser99 is a substrate binding site. A divalent metal cation contacts are provided by His103 and His113. Residue His113 is the Proton donor of the active site. 115–117 (NVR) is a binding site for substrate. A divalent metal cation-binding residues include His152 and His182. The segment at 247–282 (YVEFNLVFDRGTLFGLQSGGRTESILLSMPPTAGWR) is important for dimerization. 265-267 (GGR) is a binding site for substrate.

This sequence belongs to the aerobic coproporphyrinogen-III oxidase family. Homodimer. The cofactor is a divalent metal cation.

The protein resides in the cytoplasm. It carries out the reaction coproporphyrinogen III + O2 + 2 H(+) = protoporphyrinogen IX + 2 CO2 + 2 H2O. It participates in porphyrin-containing compound metabolism; protoporphyrin-IX biosynthesis; protoporphyrinogen-IX from coproporphyrinogen-III (O2 route): step 1/1. Its function is as follows. Involved in the heme biosynthesis. Catalyzes the aerobic oxidative decarboxylation of propionate groups of rings A and B of coproporphyrinogen-III to yield the vinyl groups in protoporphyrinogen-IX. The chain is Oxygen-dependent coproporphyrinogen-III oxidase from Burkholderia mallei (strain SAVP1).